A 461-amino-acid chain; its full sequence is Transcriptional activator RocR (461 aa).

Asp57 is modified (4-aspartylphosphate). Residues Ile143–Phe372 form the Sigma-54 factor interaction domain. ATP contacts are provided by residues Gly171–Glu178 and Ala233–Glu242. Positions Ile434 to Lys453 form a DNA-binding region, H-T-H motif.

Positive regulator of arginine catabolism. Controls the transcription of the two operons rocABC and rocDEF and probably acts by binding to the corresponding upstream activating sequences. The polypeptide is Transcriptional activator RocR (rocR) (Bacillus subtilis (strain 168)).